The primary structure comprises 96 residues: MEQAPEDQGPQREPYNEWTLELLEELKNEAVRHFPRPWLHGLGQYIYNTYGDTWEGVEAIIRILQQLLFIHFRIGCQHSRIGITPQRRVRDGPGRP.

The homooligomerization stretch occupies residues Met-1–Leu-42. Residue Ser-79 is modified to Phosphoserine; by host.

The protein belongs to the HIV-1 VPR protein family. Homooligomer, may form homodimer. Interacts with p6-gag region of the Pr55 Gag precursor protein through a (Leu-X-X)4 motif near the C-terminus of the P6gag protein. Interacts with host UNG. May interact with host RAD23A/HHR23A. Interacts with host VPRBP/DCAF1, leading to hijack the CUL4A-RBX1-DDB1-DCAF1/VPRBP complex, mediating ubiquitination of host proteins such as TERT and ZGPAT and arrest of the cell cycle in G2 phase. In terms of processing, phosphorylated on several residues by host. These phosphorylations regulate VPR activity for the nuclear import of the HIV-1 pre-integration complex.

The protein localises to the virion. Its subcellular location is the host nucleus. It is found in the host extracellular space. In terms of biological role, during virus replication, may deplete host UNG protein, and incude G2-M cell cycle arrest. Acts by targeting specific host proteins for degradation by the 26S proteasome, through association with the cellular CUL4A-DDB1 E3 ligase complex by direct interaction with host VPRPB/DCAF-1. Cell cycle arrest reportedly occurs within hours of infection and is not blocked by antiviral agents, suggesting that it is initiated by the VPR carried into the virion. Additionally, VPR induces apoptosis in a cell cycle dependent manner suggesting that these two effects are mechanistically linked. Detected in the serum and cerebrospinal fluid of AIDS patient, VPR may also induce cell death to bystander cells. Functionally, during virus entry, plays a role in the transport of the viral pre-integration (PIC) complex to the host nucleus. This function is crucial for viral infection of non-dividing macrophages. May act directly at the nuclear pore complex, by binding nucleoporins phenylalanine-glycine (FG)-repeat regions. The protein is Protein Vpr of Human immunodeficiency virus type 1 group M subtype G (isolate 92NG083) (HIV-1).